Here is a 137-residue protein sequence, read N- to C-terminus: Outer membrane protein assembly factor BamE (137 aa).

An N-terminal signal peptide occupies residues 1–18 (MQVKTLLGATFLALSLAS). Residue Cys-19 is the site of N-palmitoyl cysteine attachment. Cys-19 carries the S-diacylglycerol cysteine lipid modification.

Belongs to the BamE family. Part of the Bam complex.

The protein resides in the cell outer membrane. Functionally, part of the outer membrane protein assembly complex, which is involved in assembly and insertion of beta-barrel proteins into the outer membrane. This Haemophilus influenzae (strain ATCC 51907 / DSM 11121 / KW20 / Rd) protein is Outer membrane protein assembly factor BamE.